Reading from the N-terminus, the 156-residue chain is Endogenous retrovirus group K member 19 Pro protein (156 aa).

The Peptidase A2 domain maps to 21-96; sequence FEGLVDTGAD…IPLNLWGRDL (76 aa). The active site involves Asp-26. In terms of domain architecture, G-patch spans 111–156; that stretch reads YSPTSQKIMTKMGYILGKGLGKNEDGIKIPVEAKINQKREGIGYPF.

The protein belongs to the peptidase A2 family. HERV class-II K(HML-2) subfamily. In terms of assembly, active as a homodimer. In terms of processing, autoproteolytically processed at the N-terminus. Expected C-terminal autoprocessing not detected. The sequence shown is that of the processed Pro protein.

The enzyme catalyses Processing at the authentic HIV-1 PR recognition site and release of the mature p17 matrix and the p24 capsid protein, as a result of the cleavage of the -SQNY-|-PIVQ- cleavage site.. Its function is as follows. Retroviral proteases have roles in the processing of the primary translation products and the maturation of the viral particle. Endogenous Pro proteins may have kept, lost or modified their original function during evolution. This is Endogenous retrovirus group K member 19 Pro protein (ERVK-19) from Homo sapiens (Human).